The primary structure comprises 1000 residues: Vacuolar protein-sorting protein bro1 (1000 aa).

Residues 5 to 406 (PMISCPLKQT…EKVETADGEM (402 aa)) form the BRO1 domain. The stretch at 732–793 (YAEMTETVDS…RQLMERLSTE (62 aa)) forms a coiled coil. Disordered stretches follow at residues 760–857 (LLGQ…PYSQ) and 891–1000 (PIPA…NAWK). Residues 764-792 (IEREKAAGTSDHEEREREKLRQLMERLST) show a composition bias toward basic and acidic residues. Polar residues predominate over residues 840–849 (VPQQHGTPVS). Composition is skewed to pro residues over residues 898 to 922 (SPPP…PPVP) and 931 to 954 (YVPP…PFPS). Residues 981 to 991 (TGPSVSANSSD) are compositionally biased toward polar residues.

It belongs to the BRO1 family.

Its subcellular location is the cytoplasm. The protein resides in the endosome. Its function is as follows. Involved in concentration and sorting of cargo proteins of the multivesicular body (MVB) for incorporation into intralumenal vesicles. This Emericella nidulans (strain FGSC A4 / ATCC 38163 / CBS 112.46 / NRRL 194 / M139) (Aspergillus nidulans) protein is Vacuolar protein-sorting protein bro1 (broA).